Consider the following 230-residue polypeptide: Proteasome subunit beta 2 (230 aa).

Positions 1 to 10 (MHDPENRLTD) are enriched in basic and acidic residues. Residues 1 to 29 (MHDPENRLTDAYEPEVGNLPNEDSGRDEE) are disordered. Positions 1-35 (MHDPENRLTDAYEPEVGNLPNEDSGRDEENVVKTG) are cleaved as a propeptide — removed in mature form; by autocatalysis. The active-site Nucleophile is T36.

Belongs to the peptidase T1B family. As to quaternary structure, the 20S proteasome core is composed of 14 alpha and 14 beta subunits that assemble into four stacked heptameric rings, resulting in a barrel-shaped structure. The two inner rings, each composed of seven catalytic beta subunits, are sandwiched by two outer rings, each composed of seven alpha subunits. The catalytic chamber with the active sites is on the inside of the barrel. Has a gated structure, the ends of the cylinder being occluded by the N-termini of the alpha-subunits. Is capped at one or both ends by the proteasome regulatory ATPase, PAN.

The protein resides in the cytoplasm. It catalyses the reaction Cleavage of peptide bonds with very broad specificity.. The formation of the proteasomal ATPase PAN-20S proteasome complex, via the docking of the C-termini of PAN into the intersubunit pockets in the alpha-rings, triggers opening of the gate for substrate entry. Interconversion between the open-gate and close-gate conformations leads to a dynamic regulation of the 20S proteasome proteolysis activity. In terms of biological role, component of the proteasome core, a large protease complex with broad specificity involved in protein degradation. The polypeptide is Proteasome subunit beta 2 (Haloarcula marismortui (strain ATCC 43049 / DSM 3752 / JCM 8966 / VKM B-1809) (Halobacterium marismortui)).